Reading from the N-terminus, the 944-residue chain is Trehalose monomycolate exporter MmpL3 (944 aa).

Over 1 to 13 the chain is Cytoplasmic; it reads MFAWWGRTVYRYR. The chain crosses the membrane as a helical span at residues 14–34; that stretch reads FIVIGVMVALCLGGGVFGLSL. Residues 35 to 185 are Periplasmic-facing; that stretch reads GKHVTQSGFY…TIATDQRRME (151 aa). Residue 40–44 coordinates a 1,2-diacylglycero-3-phosphoethanolamine; it reads QSGFY. The chain crosses the membrane as a helical span at residues 186 to 206; it reads VLALPLVAVVLFFVFGGVIAA. Residues 207-209 are Cytoplasmic-facing; the sequence is GLP. Residues 210–230 form a helical membrane-spanning segment; the sequence is VMVGGLCIAGALGIMRFLAIF. At 231-235 the chain is on the periplasmic side; the sequence is GPVHY. The helical transmembrane segment at 236–256 threads the bilayer; it reads FAQPVVSLIGLGIAIDYGLFI. The Cytoplasmic portion of the chain corresponds to 257–286; the sequence is VSRFREEIAEGYDTETAVRRTVITAGRTVT. The chain crosses the membrane as a helical span at residues 287 to 307; the sequence is FSAVLIVASAIGLLLFPQGFL. Topologically, residues 308-314 are periplasmic; that stretch reads KSLTYAT. A helical membrane pass occupies residues 315 to 335; sequence IASVMLSAILSITVLPACLGI. Topologically, residues 336–396 are cytoplasmic; that stretch reads LGKHVDALGV…KLVNRVMKRP (61 aa). A helical transmembrane segment spans residues 397–417; the sequence is VLFAAPIVIIMILLIIPVGKL. Residues 418-562 are Periplasmic-facing; that stretch reads SLGGISEKYL…HGLFAKMPLM (145 aa). Residues 563-583 traverse the membrane as a helical segment; sequence VVILLTTTIVLMFLAFGSVVL. The Cytoplasmic segment spans residues 584–586; the sequence is PIK. Residues 587 to 607 traverse the membrane as a helical segment; that stretch reads ATLMSALTLGSTMGILTWIFV. Residues 608-616 are Periplasmic-facing; the sequence is DGHFSKWLN. The helical transmembrane segment at 617-637 threads the bilayer; sequence FTPTPLTAPVIGLIIALVFGL. At 638–672 the chain is on the cytoplasmic side; that stretch reads STDYEVFLVSRMVEARERGMSTQEAIRIGTAATGR. Residues 673–693 traverse the membrane as a helical segment; that stretch reads IITAAALIVAVVAGAFVFSDL. Residues 694–698 lie on the Periplasmic side of the membrane; it reads VMMKY. A helical transmembrane segment spans residues 699–719; it reads LAFGLMAALLLDATVVRMFLV. Topologically, residues 720 to 944 are cytoplasmic; sequence PSVMKLLGDD…QDLLRREGRL (225 aa). A disordered region spans residues 778–944; it reads AAGDPRPPHD…QDLLRREGRL (167 aa). Positions 791 to 828 are enriched in low complexity; the sequence is PLAESPRPARSSPASSPELTPALEATAAPAAPSGASTT. Residues 829-839 are compositionally biased toward polar residues; the sequence is RMQIGSSTEPP. Pro residues predominate over residues 855 to 866; it reads STPPPTPTPPSA.

It belongs to the resistance-nodulation-cell division (RND) (TC 2.A.6) family. MmpL subfamily. In terms of assembly, monomer. Interacts with TtfA (via N-terminus); active trehalose monomycolate (TMM) biosynthesis is not required for the complex formation.

Its subcellular location is the cell inner membrane. It is found in the cell septum. It localises to the cell tip. Transports trehalose monomycolate (TMM) to the cell wall. Flips TMM across the inner membrane. Membrane potential is not required for this function. Transports probably phosphatidylethanolamine (PE) as well. Binds specifically both TMM and PE, but not trehalose dimycolate (TDM). Also binds diacylglycerol (DAG) and other phospholipids, including phosphatidylglycerol (PG), phosphatidylinositol (PI), and cardiolipin (CDL). Contributes to membrane potential, cell wall composition, antibiotic susceptibility and fitness. Could also be part of a heme-iron acquisition system. The sequence is that of Trehalose monomycolate exporter MmpL3 (mmpL3) from Mycobacterium tuberculosis (strain CDC 1551 / Oshkosh).